A 191-amino-acid chain; its full sequence is Glycerol-3-phosphate acyltransferase (191 aa).

5 helical membrane passes run 10–30 (LAFI…CISA), 57–77 (FGSV…FLAV), 84–104 (FAST…YMAF), 118–138 (FVLV…FFVL), and 158–178 (YALL…LIFI).

It belongs to the PlsY family. As to quaternary structure, probably interacts with PlsX.

The protein resides in the cell inner membrane. It catalyses the reaction an acyl phosphate + sn-glycerol 3-phosphate = a 1-acyl-sn-glycero-3-phosphate + phosphate. The protein operates within lipid metabolism; phospholipid metabolism. Catalyzes the transfer of an acyl group from acyl-phosphate (acyl-PO(4)) to glycerol-3-phosphate (G3P) to form lysophosphatidic acid (LPA). This enzyme utilizes acyl-phosphate as fatty acyl donor, but not acyl-CoA or acyl-ACP. This chain is Glycerol-3-phosphate acyltransferase, found in Neorickettsia sennetsu (strain ATCC VR-367 / Miyayama) (Ehrlichia sennetsu).